The sequence spans 69 residues: Bowman-Birk type proteinase inhibitor A2 (69 aa).

4 cysteine pairs are disulfide-bonded: C12–C31, C18–C29, C38–C45, and C42–C59.

The protein belongs to the Bowman-Birk serine protease inhibitor family. In terms of tissue distribution, expressed in bulb (at protein level).

Functionally, serine protease inhibitor. The protein is Bowman-Birk type proteinase inhibitor A2 of Hyacinthus orientalis (Common hyacinth).